The chain runs to 319 residues: ADP-L-glycero-D-manno-heptose-6-epimerase (319 aa).

NADP(+) contacts are provided by residues 10–11, 31–32, Lys38, Lys53, and 79–83; these read FI, DD, and EGACS. Tyr144 functions as the Proton acceptor in the catalytic mechanism. Lys148 contributes to the NADP(+) binding site. Asn173 serves as a coordination point for substrate. 2 residues coordinate NADP(+): Val174 and Lys182. The active-site Proton acceptor is the Lys182. Substrate-binding positions include Ser184, His191, 205-208, Arg218, and Tyr282; that span reads FEGC.

This sequence belongs to the NAD(P)-dependent epimerase/dehydratase family. HldD subfamily. In terms of assembly, homopentamer. The cofactor is NADP(+).

The enzyme catalyses ADP-D-glycero-beta-D-manno-heptose = ADP-L-glycero-beta-D-manno-heptose. It participates in nucleotide-sugar biosynthesis; ADP-L-glycero-beta-D-manno-heptose biosynthesis; ADP-L-glycero-beta-D-manno-heptose from D-glycero-beta-D-manno-heptose 7-phosphate: step 4/4. In terms of biological role, catalyzes the interconversion between ADP-D-glycero-beta-D-manno-heptose and ADP-L-glycero-beta-D-manno-heptose via an epimerization at carbon 6 of the heptose. The chain is ADP-L-glycero-D-manno-heptose-6-epimerase from Aeromonas salmonicida (strain A449).